The chain runs to 200 residues: Superoxide dismutase [Mn], mitochondrial (200 aa).

Mn(2+) contacts are provided by His-27, His-72, Asp-157, and His-161.

This sequence belongs to the iron/manganese superoxide dismutase family. Mn(2+) is required as a cofactor.

The protein resides in the mitochondrion matrix. The catalysed reaction is 2 superoxide + 2 H(+) = H2O2 + O2. Destroys superoxide anion radicals which are normally produced within the cells and which are toxic to biological systems. In Agaricus bisporus (White button mushroom), this protein is Superoxide dismutase [Mn], mitochondrial (sod).